The chain runs to 355 residues: Tetraacyldisaccharide 4'-kinase (355 aa).

ATP is bound at residue 48-55 (SVGGTGKT).

This sequence belongs to the LpxK family.

The enzyme catalyses a lipid A disaccharide + ATP = a lipid IVA + ADP + H(+). The protein operates within glycolipid biosynthesis; lipid IV(A) biosynthesis; lipid IV(A) from (3R)-3-hydroxytetradecanoyl-[acyl-carrier-protein] and UDP-N-acetyl-alpha-D-glucosamine: step 6/6. Its function is as follows. Transfers the gamma-phosphate of ATP to the 4'-position of a tetraacyldisaccharide 1-phosphate intermediate (termed DS-1-P) to form tetraacyldisaccharide 1,4'-bis-phosphate (lipid IVA). The chain is Tetraacyldisaccharide 4'-kinase from Pelodictyon phaeoclathratiforme (strain DSM 5477 / BU-1).